A 264-amino-acid polypeptide reads, in one-letter code: NAD kinase 1 (264 aa).

The Proton acceptor role is filled by Asp-45. NAD(+)-binding positions include 45–46 (DG), 122–123 (NE), Arg-148, Asp-150, 161–166 (TAYNKS), and Ala-185.

The protein belongs to the NAD kinase family. It depends on a divalent metal cation as a cofactor.

The protein resides in the cytoplasm. The enzyme catalyses NAD(+) + ATP = ADP + NADP(+) + H(+). Its function is as follows. Involved in the regulation of the intracellular balance of NAD and NADP, and is a key enzyme in the biosynthesis of NADP. Catalyzes specifically the phosphorylation on 2'-hydroxyl of the adenosine moiety of NAD to yield NADP. The polypeptide is NAD kinase 1 (Listeria innocua serovar 6a (strain ATCC BAA-680 / CLIP 11262)).